The chain runs to 529 residues: Peptide chain release factor 3 (529 aa).

A tr-type G domain is found at 11-280 (AKRRTFAIIS…GLVAWAPAPM (270 aa)). GTP is bound by residues 20–27 (SHPDAGKT), 88–92 (DTPGH), and 142–145 (NKLD).

Belongs to the TRAFAC class translation factor GTPase superfamily. Classic translation factor GTPase family. PrfC subfamily.

The protein localises to the cytoplasm. Its function is as follows. Increases the formation of ribosomal termination complexes and stimulates activities of RF-1 and RF-2. It binds guanine nucleotides and has strong preference for UGA stop codons. It may interact directly with the ribosome. The stimulation of RF-1 and RF-2 is significantly reduced by GTP and GDP, but not by GMP. The sequence is that of Peptide chain release factor 3 from Salmonella gallinarum (strain 287/91 / NCTC 13346).